We begin with the raw amino-acid sequence, 663 residues long: Bifunctional polymyxin resistance protein ArnA (663 aa).

The formyltransferase ArnAFT stretch occupies residues 1–307 (MSPKAVVFAY…EFGLVEGSQL (307 aa)). H106 acts as the Proton donor; for formyltransferase activity in catalysis. (6R)-10-formyltetrahydrofolate-binding positions include R116 and 138–142 (VKRAD). The interval 317–663 (RRTRVLILGV…EAMAEKADMR (347 aa)) is dehydrogenase ArnADH. Residues D350 and 371–372 (DI) contribute to the NAD(+) site. UDP-alpha-D-glucuronate contacts are provided by residues A396, Y401, and 435–436 (TS). The active-site Proton acceptor; for decarboxylase activity is E437. UDP-alpha-D-glucuronate-binding positions include R463, N494, 528–537 (RLVDGGAQKR), and Y615. R621 (proton donor; for decarboxylase activity) is an active-site residue.

In the N-terminal section; belongs to the Fmt family. UDP-L-Ara4N formyltransferase subfamily. The protein in the C-terminal section; belongs to the NAD(P)-dependent epimerase/dehydratase family. UDP-glucuronic acid decarboxylase subfamily. As to quaternary structure, homohexamer, formed by a dimer of trimers.

The enzyme catalyses UDP-alpha-D-glucuronate + NAD(+) = UDP-beta-L-threo-pentopyranos-4-ulose + CO2 + NADH. The catalysed reaction is UDP-4-amino-4-deoxy-beta-L-arabinose + (6R)-10-formyltetrahydrofolate = UDP-4-deoxy-4-formamido-beta-L-arabinose + (6S)-5,6,7,8-tetrahydrofolate + H(+). It functions in the pathway nucleotide-sugar biosynthesis; UDP-4-deoxy-4-formamido-beta-L-arabinose biosynthesis; UDP-4-deoxy-4-formamido-beta-L-arabinose from UDP-alpha-D-glucuronate: step 1/3. The protein operates within nucleotide-sugar biosynthesis; UDP-4-deoxy-4-formamido-beta-L-arabinose biosynthesis; UDP-4-deoxy-4-formamido-beta-L-arabinose from UDP-alpha-D-glucuronate: step 3/3. Its pathway is bacterial outer membrane biogenesis; lipopolysaccharide biosynthesis. Bifunctional enzyme that catalyzes the oxidative decarboxylation of UDP-glucuronic acid (UDP-GlcUA) to UDP-4-keto-arabinose (UDP-Ara4O) and the addition of a formyl group to UDP-4-amino-4-deoxy-L-arabinose (UDP-L-Ara4N) to form UDP-L-4-formamido-arabinose (UDP-L-Ara4FN). The modified arabinose is attached to lipid A and is required for resistance to polymyxin and cationic antimicrobial peptides. This Pseudomonas savastanoi pv. phaseolicola (strain 1448A / Race 6) (Pseudomonas syringae pv. phaseolicola (strain 1448A / Race 6)) protein is Bifunctional polymyxin resistance protein ArnA.